Reading from the N-terminus, the 309-residue chain is tRNA pseudouridine synthase B (309 aa).

Aspartate 52 functions as the Nucleophile in the catalytic mechanism.

This sequence belongs to the pseudouridine synthase TruB family. Type 1 subfamily.

The enzyme catalyses uridine(55) in tRNA = pseudouridine(55) in tRNA. In terms of biological role, responsible for synthesis of pseudouridine from uracil-55 in the psi GC loop of transfer RNAs. In Leptospira interrogans serogroup Icterohaemorrhagiae serovar Lai (strain 56601), this protein is tRNA pseudouridine synthase B.